Here is a 414-residue protein sequence, read N- to C-terminus: Voltage-gated ClC-type chloride channel ClcB (414 aa).

The next 11 membrane-spanning stretches (helical) occupy residues 5–25, 54–74, 116–136, 147–167, 169–189, 220–240, 255–275, 292–312, 327–347, 353–373, and 381–401; these read LVIS…FHQA, ALTP…YQRY, SAIG…SVFA, LWVA…PLAG, LFIA…PVVI, VQYF…PLFL, LLPP…SLIF, TPPG…AVLA, LFVG…WPVL, LLMA…APIM, and MTGE…ATTI.

The protein belongs to the chloride channel (TC 2.A.49) family. ClcB subfamily.

It localises to the cell inner membrane. Its function is as follows. Probably acts as an electrical shunt for an outwardly-directed proton pump that is linked to amino acid decarboxylation, as part of the extreme acid resistance (XAR) response. The sequence is that of Voltage-gated ClC-type chloride channel ClcB from Yersinia pseudotuberculosis serotype O:1b (strain IP 31758).